The chain runs to 110 residues: Large ribosomal subunit protein uL22 (110 aa).

This sequence belongs to the universal ribosomal protein uL22 family. In terms of assembly, part of the 50S ribosomal subunit.

Functionally, this protein binds specifically to 23S rRNA; its binding is stimulated by other ribosomal proteins, e.g. L4, L17, and L20. It is important during the early stages of 50S assembly. It makes multiple contacts with different domains of the 23S rRNA in the assembled 50S subunit and ribosome. In terms of biological role, the globular domain of the protein is located near the polypeptide exit tunnel on the outside of the subunit, while an extended beta-hairpin is found that lines the wall of the exit tunnel in the center of the 70S ribosome. This Shigella flexneri serotype 5b (strain 8401) protein is Large ribosomal subunit protein uL22.